Reading from the N-terminus, the 176-residue chain is Ribosome maturation factor RimM (176 aa).

The PRC barrel domain maps to 100 to 173 (EGEFHLLDLV…WLRLTPPPGL (74 aa)).

Belongs to the RimM family. Binds ribosomal protein uS19.

The protein resides in the cytoplasm. An accessory protein needed during the final step in the assembly of 30S ribosomal subunit, possibly for assembly of the head region. Essential for efficient processing of 16S rRNA. May be needed both before and after RbfA during the maturation of 16S rRNA. It has affinity for free ribosomal 30S subunits but not for 70S ribosomes. The polypeptide is Ribosome maturation factor RimM (Prochlorococcus marinus (strain MIT 9303)).